A 460-amino-acid polypeptide reads, in one-letter code: Nuclear distribution protein PAC1-1 (460 aa).

The 33-residue stretch at 9-41 folds into the LisH domain; sequence QADELHRALIAYLTAANLPNTAAALREELNLGE. Residues 74–96 are a coiled coil; that stretch reads LVTQIMDLESRNHILQSELDNAT. Over residues 90 to 100 the composition is skewed to polar residues; the sequence is SELDNATPTSR. Residues 90 to 115 form a disordered region; that stretch reads SELDNATPTSRQNKDPVAWLPRAPPR. 8 WD repeats span residues 120–161, 163–203, 207–247, 250–289, 294–354, 355–394, 399–439, and 441–460; these read SHRD…RTIK, HTKA…KNIR, GHDH…CVKT, GHAE…PEPR, GHEH…KTLA, GHDN…KCVK, AHGH…VTPD, and QIRC…IFAN.

This sequence belongs to the WD repeat LIS1/nudF family. As to quaternary structure, self-associates. Interacts with NDL1 and dynein.

It localises to the cytoplasm. The protein localises to the cytoskeleton. It is found in the spindle pole. Its function is as follows. Positively regulates the activity of the minus-end directed microtubule motor protein dynein. May enhance dynein-mediated microtubule sliding by targeting dynein to the microtubule plus end. Required for nuclear migration during vegetative growth as well as development. Required for retrograde early endosome (EE) transport from the hyphal tip. Required for localization of dynein to the mitotic spindle poles. Recruits additional proteins to the dynein complex at SPBs. The protein is Nuclear distribution protein PAC1-1 of Sordaria macrospora (strain ATCC MYA-333 / DSM 997 / K(L3346) / K-hell).